The chain runs to 449 residues: uncharacterized protein (449 aa).

13 consecutive transmembrane segments (helical) span residues 1-21, 26-46, 51-71, 97-117, 137-157, 178-198, 223-243, 244-264, 285-305, 310-330, 340-360, 377-397, and 425-445; these read MVAN…ILLI, IHLT…HVIT, IDYI…MVLV, LLML…PNAT, FVPI…LTLV, FKLS…TPFL, VLMA…IGES, LPVP…ALLL, LIFF…GVTA, LLAV…VFTV, IPLV…IGFA, VLPL…GTLV, and GLPV…WLMF.

This sequence belongs to the CitM (TC 2.A.11) transporter family.

The protein localises to the cell membrane. This is an uncharacterized protein from Synechocystis sp. (strain ATCC 27184 / PCC 6803 / Kazusa).